The sequence spans 736 residues: MSAPEPKITPELVASHGLKPDEYQRILDLIGREPSFTELGIFSAMWNEHCSYKSSRIHLRGLPTKAPWVLQGPGENAGVIDIGDNQAVVFKMESHNHPSYIEPYQGATTGVGGILRDVFTMGARPIACLNALSFGAPEHPKTRHLVSGVVAGVGGYGNSFGVPTVGGQTRFHTRYDGNILVNAMAVGLADADKIFLAAASGVGMPIVYLGSKTGRDGMGGATMASAEFGEGSEEKRPTVQVGDPFAEKLLLEACLEIMANDCVIAIQDMGAAGLTCSAVEMGAKGDLGVDLDLDAVPTRETGMTAYEMMLSESQERMLMVLKPEKEKEAEAIFRKWGLDFAVVGYTTPTKRFVVKHGGKAMADLPIKELGDEAPLYDRPWVESPKLPVIHAREVNAPNSIADALEKLLATPDLCSKRWVWEQYDHVIGGNTLQRPGGDAAVVRVQDGPKGLALTVDVTPRYCEADPFEGGKQAVAEAWRNITAVGGKPLAITDNLNFGNPERPEIMGQFVGCLKGIAEACIAFDFPVVSGNVSLYNETSGRGILPTPSIGGVGLLDDFTKSATLAFKAEGEAILLIGETHGWLGQSVYLRDICGREEGAPPPVDLACEKRHGDVVRGMIHAGTATAVHDLSDGGLLVALAEMALAGSIGASLEAPPDGIVPHAWWFGEDQGRYLVTVKEDDLLTVLSKMKSVGVSCEQIGRTAGHTLKIEGERALDLKALRHAHEHWLPDYMGGKN.

His-49 is a catalytic residue. ATP contacts are provided by Tyr-52 and Lys-91. Residue Glu-93 participates in Mg(2+) binding. Residues 94–97 (SHNH) and Arg-116 contribute to the substrate site. His-95 acts as the Proton acceptor in catalysis. Asp-117 lines the Mg(2+) pocket. Position 240 (Gln-240) interacts with substrate. Asp-268 provides a ligand contact to Mg(2+). 312–314 (ESQ) contributes to the substrate binding site. ATP contacts are provided by Asp-493 and Gly-530. Residue Asn-531 coordinates Mg(2+). Ser-533 is a binding site for substrate.

The protein belongs to the FGAMS family. As to quaternary structure, monomer. Part of the FGAM synthase complex composed of 1 PurL, 1 PurQ and 2 PurS subunits.

It localises to the cytoplasm. It catalyses the reaction N(2)-formyl-N(1)-(5-phospho-beta-D-ribosyl)glycinamide + L-glutamine + ATP + H2O = 2-formamido-N(1)-(5-O-phospho-beta-D-ribosyl)acetamidine + L-glutamate + ADP + phosphate + H(+). It functions in the pathway purine metabolism; IMP biosynthesis via de novo pathway; 5-amino-1-(5-phospho-D-ribosyl)imidazole from N(2)-formyl-N(1)-(5-phospho-D-ribosyl)glycinamide: step 1/2. Part of the phosphoribosylformylglycinamidine synthase complex involved in the purines biosynthetic pathway. Catalyzes the ATP-dependent conversion of formylglycinamide ribonucleotide (FGAR) and glutamine to yield formylglycinamidine ribonucleotide (FGAM) and glutamate. The FGAM synthase complex is composed of three subunits. PurQ produces an ammonia molecule by converting glutamine to glutamate. PurL transfers the ammonia molecule to FGAR to form FGAM in an ATP-dependent manner. PurS interacts with PurQ and PurL and is thought to assist in the transfer of the ammonia molecule from PurQ to PurL. This chain is Phosphoribosylformylglycinamidine synthase subunit PurL, found in Rhodopseudomonas palustris (strain BisB5).